Here is a 129-residue protein sequence, read N- to C-terminus: Fluoride-specific ion channel FluC (129 aa).

Helical transmembrane passes span 4 to 24 (LFVA…SGLI), 32 to 52 (FPWG…AFAT), 69 to 89 (FFMV…LQTL), and 105 to 125 (VLSV…AVLI). Na(+) contacts are provided by Gly-76 and Thr-79.

It belongs to the fluoride channel Fluc/FEX (TC 1.A.43) family.

It is found in the cell inner membrane. It catalyses the reaction fluoride(in) = fluoride(out). Its activity is regulated as follows. Na(+) is not transported, but it plays an essential structural role and its presence is essential for fluoride channel function. Fluoride-specific ion channel. Important for reducing fluoride concentration in the cell, thus reducing its toxicity. This is Fluoride-specific ion channel FluC from Rhodospirillum rubrum (strain ATCC 11170 / ATH 1.1.1 / DSM 467 / LMG 4362 / NCIMB 8255 / S1).